We begin with the raw amino-acid sequence, 519 residues long: MQSLWIYPEDTEVLGAACKSLLKALKPRYQKIALFSPISGGCEGFGECESLSSLEVHSAIDKQKALELVSTAQEELLFETILKRYDELQSTHDFVINLGYAPKFFLNALLDLNTILAKHLNAPVVAVAQTSLDHLKAMHSHILKKEAPFAIGLFVGETLEKPHFLSASLCKQQCELEASAIENLLQTKSEIITPLAFQRSLEKKAKKQIKKVVLPESEDERILKAAHRLNLMGAVGLILLGDKEAINSQAKNLNLNLENVEIINPNTSHYREEFAKSLYELRKSKGLSEQEAERLALDKTYFATMLVHLGYAHAMVSGVNHTTAETIRPALQIIKTKPGVSLVSSVFLMCLDTQVFVFGDCAIIPNPSPKELAEIATTSAQTAKQFNIAPKVALLSYATGNSAQGEMIDKINEALTIVQKLDPQLEIDGPLQFDASIDKGVAKKKMPNSQVAGQASVFIFPDLNAGNIAYKAVQRSAKAVAIGPILQGLNKPINDLSRGALVEDIVNTVLISAIQAQDY.

Residues Ala-196 to Tyr-519 form a phosphate acetyltransferase region.

The protein in the N-terminal section; belongs to the CobB/CobQ family. It in the C-terminal section; belongs to the phosphate acetyltransferase and butyryltransferase family.

The protein resides in the cytoplasm. It catalyses the reaction acetyl-CoA + phosphate = acetyl phosphate + CoA. It participates in metabolic intermediate biosynthesis; acetyl-CoA biosynthesis; acetyl-CoA from acetate: step 2/2. In Helicobacter pylori (strain J99 / ATCC 700824) (Campylobacter pylori J99), this protein is Phosphate acetyltransferase (pta).